The primary structure comprises 670 residues: DNA ligase (670 aa).

NAD(+) is bound by residues 31-35 (DAEYD), 76-77 (SL), and Glu108. Lys110 serves as the catalytic N6-AMP-lysine intermediate. NAD(+) contacts are provided by Arg131, Glu166, Lys271, and Lys295. Zn(2+)-binding residues include Cys388, Cys391, Cys406, and Cys412. The BRCT domain occupies 579-668 (NIGGSLSGKK…NTPALKKETS (90 aa)).

Belongs to the NAD-dependent DNA ligase family. LigA subfamily. Requires Mg(2+) as cofactor. Mn(2+) serves as cofactor.

It carries out the reaction NAD(+) + (deoxyribonucleotide)n-3'-hydroxyl + 5'-phospho-(deoxyribonucleotide)m = (deoxyribonucleotide)n+m + AMP + beta-nicotinamide D-nucleotide.. In terms of biological role, DNA ligase that catalyzes the formation of phosphodiester linkages between 5'-phosphoryl and 3'-hydroxyl groups in double-stranded DNA using NAD as a coenzyme and as the energy source for the reaction. It is essential for DNA replication and repair of damaged DNA. This is DNA ligase from Neorickettsia sennetsu (strain ATCC VR-367 / Miyayama) (Ehrlichia sennetsu).